Here is a 191-residue protein sequence, read N- to C-terminus: Protein GrpE (191 aa).

This sequence belongs to the GrpE family. As to quaternary structure, homodimer.

It is found in the cytoplasm. Functionally, participates actively in the response to hyperosmotic and heat shock by preventing the aggregation of stress-denatured proteins, in association with DnaK and GrpE. It is the nucleotide exchange factor for DnaK and may function as a thermosensor. Unfolded proteins bind initially to DnaJ; upon interaction with the DnaJ-bound protein, DnaK hydrolyzes its bound ATP, resulting in the formation of a stable complex. GrpE releases ADP from DnaK; ATP binding to DnaK triggers the release of the substrate protein, thus completing the reaction cycle. Several rounds of ATP-dependent interactions between DnaJ, DnaK and GrpE are required for fully efficient folding. This chain is Protein GrpE, found in Listeria monocytogenes serotype 4b (strain CLIP80459).